Consider the following 411-residue polypeptide: Lissencephaly-1 homolog (411 aa).

One can recognise a LisH domain in the interval 7-39 (QREELNKAIADYLASNGFMEALESFKKETDMPG). The stretch at 54-80 (TSVIRLQKKVMDLEGRLAEAEKEYISG) forms a coiled coil. The segment covering 77-89 (YISGTPSREKRSP) has biased composition (basic and acidic residues). The disordered stretch occupies residues 77–96 (YISGTPSREKRSPTEWIPRP). WD repeat units lie at residues 104-145 (GHRA…RTIK), 146-187 (GHTD…RTMH), 188-227 (GHDH…CVRT), 230-269 (GHRD…CKLE), 272-334 (EHDH…ALFT), 337-376 (GHDN…CCKT), and 379-411 (AHSH…WECR).

This sequence belongs to the WD repeat LIS1/nudF family.

It is found in the cytoplasm. The protein localises to the cytoskeleton. Its subcellular location is the microtubule organizing center. It localises to the centrosome. Positively regulates the activity of the minus-end directed microtubule motor protein dynein. May enhance dynein-mediated microtubule sliding by targeting dynein to the microtubule plus end. Required for several dynein- and microtubule-dependent processes. The sequence is that of Lissencephaly-1 homolog from Ixodes scapularis (Black-legged tick).